Reading from the N-terminus, the 123-residue chain is UPF0102 protein Dole_2298 (123 aa).

Belongs to the UPF0102 family.

This chain is UPF0102 protein Dole_2298, found in Desulfosudis oleivorans (strain DSM 6200 / JCM 39069 / Hxd3) (Desulfococcus oleovorans).